The sequence spans 366 residues: Chorismate synthase (366 aa).

NADP(+)-binding residues include Arg-48 and Arg-54. Residues Arg-125–Ser-127, Asn-238–Ala-239, Gly-278, Lys-293–Ser-297, and Arg-319 contribute to the FMN site.

It belongs to the chorismate synthase family. As to quaternary structure, homotetramer. The cofactor is FMNH2.

The enzyme catalyses 5-O-(1-carboxyvinyl)-3-phosphoshikimate = chorismate + phosphate. It functions in the pathway metabolic intermediate biosynthesis; chorismate biosynthesis; chorismate from D-erythrose 4-phosphate and phosphoenolpyruvate: step 7/7. Catalyzes the anti-1,4-elimination of the C-3 phosphate and the C-6 proR hydrogen from 5-enolpyruvylshikimate-3-phosphate (EPSP) to yield chorismate, which is the branch point compound that serves as the starting substrate for the three terminal pathways of aromatic amino acid biosynthesis. This reaction introduces a second double bond into the aromatic ring system. This chain is Chorismate synthase, found in Burkholderia ambifaria (strain MC40-6).